We begin with the raw amino-acid sequence, 190 residues long: Protein LZIC (190 aa).

Positions 2 to 63 (ASRGKTETSK…SEFNDSLKKI (62 aa)) form a coiled coil.

The protein belongs to the CTNNBIP1 family. As to quaternary structure, does not interact with CTNNB1. As to expression, ubiquitously expressed, with highest levels in kidney. Up-regulated in several cases of gastric cancers.

The chain is Protein LZIC (LZIC) from Homo sapiens (Human).